A 416-amino-acid polypeptide reads, in one-letter code: Gamma-glutamyl phosphate reductase (416 aa).

Belongs to the gamma-glutamyl phosphate reductase family.

The protein resides in the cytoplasm. The catalysed reaction is L-glutamate 5-semialdehyde + phosphate + NADP(+) = L-glutamyl 5-phosphate + NADPH + H(+). It functions in the pathway amino-acid biosynthesis; L-proline biosynthesis; L-glutamate 5-semialdehyde from L-glutamate: step 2/2. Catalyzes the NADPH-dependent reduction of L-glutamate 5-phosphate into L-glutamate 5-semialdehyde and phosphate. The product spontaneously undergoes cyclization to form 1-pyrroline-5-carboxylate. The polypeptide is Gamma-glutamyl phosphate reductase (Streptococcus mutans serotype c (strain ATCC 700610 / UA159)).